Here is a 281-residue protein sequence, read N- to C-terminus: ATP phosphoribosyltransferase (281 aa).

Belongs to the ATP phosphoribosyltransferase family. Long subfamily. Mg(2+) serves as cofactor.

It localises to the cytoplasm. The catalysed reaction is 1-(5-phospho-beta-D-ribosyl)-ATP + diphosphate = 5-phospho-alpha-D-ribose 1-diphosphate + ATP. The protein operates within amino-acid biosynthesis; L-histidine biosynthesis; L-histidine from 5-phospho-alpha-D-ribose 1-diphosphate: step 1/9. Feedback inhibited by histidine. Its function is as follows. Catalyzes the condensation of ATP and 5-phosphoribose 1-diphosphate to form N'-(5'-phosphoribosyl)-ATP (PR-ATP). Has a crucial role in the pathway because the rate of histidine biosynthesis seems to be controlled primarily by regulation of HisG enzymatic activity. This chain is ATP phosphoribosyltransferase, found in Corynebacterium diphtheriae (strain ATCC 700971 / NCTC 13129 / Biotype gravis).